The chain runs to 184 residues: ATP synthase subunit b, chloroplastic (184 aa).

Residues 27–49 (LATNPINLSVVLGVLIFFGKGVL) form a helical membrane-spanning segment.

Belongs to the ATPase B chain family. As to quaternary structure, F-type ATPases have 2 components, F(1) - the catalytic core - and F(0) - the membrane proton channel. F(1) has five subunits: alpha(3), beta(3), gamma(1), delta(1), epsilon(1). F(0) has four main subunits: a(1), b(1), b'(1) and c(10-14). The alpha and beta chains form an alternating ring which encloses part of the gamma chain. F(1) is attached to F(0) by a central stalk formed by the gamma and epsilon chains, while a peripheral stalk is formed by the delta, b and b' chains.

Its subcellular location is the plastid. It localises to the chloroplast thylakoid membrane. F(1)F(0) ATP synthase produces ATP from ADP in the presence of a proton or sodium gradient. F-type ATPases consist of two structural domains, F(1) containing the extramembraneous catalytic core and F(0) containing the membrane proton channel, linked together by a central stalk and a peripheral stalk. During catalysis, ATP synthesis in the catalytic domain of F(1) is coupled via a rotary mechanism of the central stalk subunits to proton translocation. In terms of biological role, component of the F(0) channel, it forms part of the peripheral stalk, linking F(1) to F(0). The polypeptide is ATP synthase subunit b, chloroplastic (Chloranthus spicatus (Chulantree)).